We begin with the raw amino-acid sequence, 553 residues long: Putative transport protein YidE (553 aa).

Transmembrane regions (helical) follow at residues 4–24 (IALT…IGNI), 28–48 (GVGF…HFVD), 65–85 (FGLI…FFAS), 95–115 (LFAV…HKIF), and 158–178 (MSYA…MWLM). RCK C-terminal domains are found at residues 192-276 (KHES…VIGK) and 279-361 (DTSL…VVGN). Helical transmembrane passes span 371 to 391 (MLPV…PLFV), 403 to 425 (AGGP…LYWF), 437 to 457 (LGIV…FVNT), 464 to 484 (LSWI…VGLL), and 533 to 553 (LVMF…WGIG).

The protein belongs to the AAE transporter (TC 2.A.81) family. YidE subfamily.

It is found in the cell membrane. The sequence is that of Putative transport protein YidE from Salmonella arizonae (strain ATCC BAA-731 / CDC346-86 / RSK2980).